A 353-amino-acid polypeptide reads, in one-letter code: Guanidino acid hydrolase, mitochondrial (353 aa).

The transit peptide at 1–33 (MLQLLKSSWVRSAGSGVVTWRASAGLFCPGTRQ) directs the protein to the mitochondrion. Residues 29-52 (PGTRQASDTSDTLHHPSPSSESQV) form a disordered region. Positions 163 and 188 each coordinate Mn(2+). Residue Lys194 is modified to N6-acetyllysine. Position 218 is an N6-acetyllysine; alternate (Lys218). Lys218 bears the N6-succinyllysine; alternate mark. Asp279 is a binding site for Mn(2+).

It belongs to the arginase family. Agmatinase subfamily. It depends on Mn(2+) as a cofactor.

Its subcellular location is the mitochondrion. The enzyme catalyses 3-guanidinopropanoate + H2O = urea + beta-alanine. The catalysed reaction is 4-guanidinobutanoate + H2O = urea + 4-aminobutanoate. It carries out the reaction taurocyamine + H2O = urea + taurine. It catalyses the reaction L-arginine + H2O = urea + L-ornithine. The protein operates within nitrogen metabolism; urea cycle; L-ornithine and urea from L-arginine: step 1/1. Hydrolyzes linear guanidino acids to form urea and the corresponding amines. Displays specificity for substrates having a negatively charged head group and short chains including taurocyamine, guanidino propanoic and butanoic acids. May protect cells by detoxifying potentially harmful amounts of guanidino acids. Metabolizes L-arginine with low efficiency. This is Guanidino acid hydrolase, mitochondrial (Agmat) from Rattus norvegicus (Rat).